We begin with the raw amino-acid sequence, 210 residues long: 7-methyl-GTP pyrophosphatase (210 aa).

Asp79 serves as the catalytic Proton acceptor.

It belongs to the Maf family. YceF subfamily. Requires a divalent metal cation as cofactor.

The protein localises to the cytoplasm. The enzyme catalyses N(7)-methyl-GTP + H2O = N(7)-methyl-GMP + diphosphate + H(+). Functionally, nucleoside triphosphate pyrophosphatase that hydrolyzes 7-methyl-GTP (m(7)GTP). May have a dual role in cell division arrest and in preventing the incorporation of modified nucleotides into cellular nucleic acids. This Burkholderia lata (strain ATCC 17760 / DSM 23089 / LMG 22485 / NCIMB 9086 / R18194 / 383) protein is 7-methyl-GTP pyrophosphatase.